The following is a 628-amino-acid chain: MYSILRRAAPLRRRAVSALAAAVLRREEAAAEVVVSRRATIPAAWFHSSPAWLGFRETGAAGAAARPQYAADEGLFYEEDKRGAKAGGVAAGGAEEGLEVAKLGISPKIVSQLASRGITKLFPIQRAVLEPAMQGKDMVGRAKTGTGKTLAFGIPILDAIIRHNEKNSPGKFPLAIVLAPTRELAKQVEREFSDSSNVETICVYGGTPISQQIRQLNYGVDVVIGTPGRVIDLLKRGALNLSEVRFVVLDEADQMLSVGFDEDVETILDRVPPKRQTLMFSATMPTWIQRLTQKYLKNPVTIDLVGEDDQKLAEGISLYSIASEGHAKPAVLGELIKEHAKGGKCIVFTQTKRDADRLSYTMGRSFQCQALHGDITQAQRERTLKGFREGHFNILIATDVAARGLDIPNVDLVIHFELPNSSELFVHRSGRTGRAGKKGKAIVMHSYQQSRAIRMVENDVGCKFTELPKINVEGSDLMSGGFDSFGGGGFGREGGGSYGRRGSFGSSSSRGGGFGDSGFGRSGGGFGRSGGGGFGRSSGGGFGDSGFGRSGGGGFGDSGFGRSGGGGYGDSGFGSSGGGSGRSGFGRSGGFGDSGSGRFGGGFGNSGSGSFGNFGGNNSGQSGGFGSS.

Residues 98–126 (LEVAKLGISPKIVSQLASRGITKLFPIQR) carry the Q motif motif. The 174-residue stretch at 129-302 (LEPAMQGKDM…QKYLKNPVTI (174 aa)) folds into the Helicase ATP-binding domain. Residue 142–149 (AKTGTGKT) coordinates ATP. The DEAD box motif lies at 250–253 (DEAD). Residues 331–478 (VLGELIKEHA…KINVEGSDLM (148 aa)) form the Helicase C-terminal domain. 2 disordered regions span residues 496–548 (GSYG…SGFG) and 571–628 (SGFG…FGSS). The span at 500 to 509 (RRGSFGSSSS) shows a compositional bias: low complexity. Over residues 510-548 (RGGGFGDSGFGRSGGGFGRSGGGGFGRSSGGGFGDSGFG) the composition is skewed to gly residues.

This sequence belongs to the DEAD box helicase family. DDX21/DDX50 subfamily.

The enzyme catalyses ATP + H2O = ADP + phosphate + H(+). This Oryza sativa subsp. japonica (Rice) protein is DEAD-box ATP-dependent RNA helicase 9.